The primary structure comprises 290 residues: GTPase Era (290 aa).

Positions Lys2–Glu169 constitute an Era-type G domain. A G1 region spans residues Gly10–Ser17. Gly10–Ser17 is a GTP binding site. The tract at residues Gln36 to Asn40 is G2. The G3 stretch occupies residues Asp57 to Gly60. GTP-binding positions include Asp57–Phe61 and Asn119–Asp122. Positions Asn119–Asp122 are G4. The interval Ile148–Ala150 is G5. The 77-residue stretch at Leu200 to Lys276 folds into the KH type-2 domain.

The protein belongs to the TRAFAC class TrmE-Era-EngA-EngB-Septin-like GTPase superfamily. Era GTPase family. Monomer.

Its subcellular location is the cytoplasm. It localises to the cell inner membrane. In terms of biological role, an essential GTPase that binds both GDP and GTP, with rapid nucleotide exchange. Plays a role in 16S rRNA processing and 30S ribosomal subunit biogenesis and possibly also in cell cycle regulation and energy metabolism. This Borrelia duttonii (strain Ly) protein is GTPase Era.